The sequence spans 983 residues: Inner tegument protein (983 aa).

The interval 474–983 (LNVNTHFAVQ…TSVSLPPASP (510 aa)) is interaction with large tegument protein. The disordered stretch occupies residues 901–932 (APWESAPQPPRLRMTPDTDHEESTAGATSVPE). The span at 914 to 923 (MTPDTDHEES) shows a compositional bias: basic and acidic residues.

It belongs to the herpesviridae inner tegument protein family. Interacts (via C-terminus) with the large tegument protein/LTP (via N-terminus).

Its subcellular location is the virion tegument. The protein resides in the host cytoplasm. The protein localises to the host nucleus. It is found in the host Golgi apparatus. It localises to the host trans-Golgi network. Plays an essential role in cytoplasmic secondary envelopment during viral egress. Interacts with the capsid via the large tegument protein/LTP and participates in its transport to the host trans-Golgi network (TGN) where secondary envelopment occurs. Modulates tegumentation and capsid accumulation at the viral assembly complex. This Homo sapiens (Human) protein is Inner tegument protein (UL47).